A 192-amino-acid chain; its full sequence is Cytidylate kinase (192 aa).

Glycine 7–threonine 15 serves as a coordination point for ATP.

The protein belongs to the cytidylate kinase family. Type 2 subfamily.

The protein localises to the cytoplasm. The catalysed reaction is CMP + ATP = CDP + ADP. It carries out the reaction dCMP + ATP = dCDP + ADP. The protein is Cytidylate kinase of Haloarcula marismortui (strain ATCC 43049 / DSM 3752 / JCM 8966 / VKM B-1809) (Halobacterium marismortui).